Consider the following 301-residue polypeptide: Peroxisome assembly protein 26 (301 aa).

Residues 1 to 246 (MKNDSSTSAA…DAAASHLLSQ (246 aa)) are Cytoplasmic-facing. A helical; Signal-anchor for type II membrane protein membrane pass occupies residues 247–263 (PFKKSLLAALILCLLVL). Topologically, residues 264–301 (RFDPATPSSLPFLYQLAHLFRRIQKATLSRLYPLALRD) are peroxisomal.

The protein belongs to the peroxin-26 family. As to quaternary structure, interacts directly with PEX6 via its cytoplasmic domain. Interacts indirectly with PEX1, via its interaction with PEX6.

It is found in the peroxisome membrane. Functionally, peroxisomal docking factor that anchors PEX1 and PEX6 to peroxisome membranes. It is therefore required for the formation of the PEX1-PEX6 AAA ATPase complex, a complex that mediates the extraction of the PEX5 receptor from peroxisomal membrane. The polypeptide is Peroxisome assembly protein 26 (Pex26) (Cricetulus griseus (Chinese hamster)).